Here is a 605-residue protein sequence, read N- to C-terminus: MVQAPSVYVCGFVERPDAPPKDACLHLDPLTVKSQLPLKKPLPLTVEHLPDAPVGSVFGLYQSRAGLFSAASITSGVFLSLLDSIYHDCDIAQSQRLPLPREPKLEALHAWLPSLSLASLHPDIPQTTADGGKLSFFDHVSICALGRRRGTTAVYGTDLAWVLKHFSDLEPSIAAQIENDANAAKRESGCPEDHPLPLTKLIAKAIDAGFLRNRVETLRQDRGVANIPAESYLKASDAPDLQKPDKALQSPPPASTDPDTMLSGNAGEGATACGGSAAAGQDLISVPRNTFMTLLQTNLDNKPPRQTPLPYAAPLPPFSHQAIATAPSYGPGAGAVAPAGGYFTSPGGYYAGPAGGDPGAFLAMDAHTYHPHPHPPPAYFGLPGLFGPPPPVPPYYGSHLRADYVPAPSRSNKRKRDPEEDEEGGGLFPGEDATLYRKDIAGLSKSVNELQHTLQALRRETLSYGHTGVGYCPQQGPCYTHPGPYGFQPHQSYEVPRYVPHPPPPPTSHQAAQAQPPPPGTQAPEAHCVAESTIPEAGAAGNSGPREDTNPQQPTTEGHHRGKKLVQASASGVAQSKEPTTPKAKSVSAHLKSIFCEELLNKRVA.

Residues H48, S116, and H139 each act as charge relay system in the active site. Residues 235–275 (ASDAPDLQKPDKALQSPPPASTDPDTMLSGNAGEGATACGG) form a disordered region. Residues 281 to 300 (QDLISVPRNTFMTLLQTNLD) form an interaction with pAP region. Disordered regions lie at residues 403–432 (DYVPAPSRSNKRKRDPEEDEEGGGLFPGED) and 489–588 (PHQS…KSVS). Positions 410-416 (RSNKRKR) match the Nuclear localization signal motif. The span at 568–579 (ASASGVAQSKEP) shows a compositional bias: polar residues. The interaction with major capsid protein stretch occupies residues 585 to 605 (KSVSAHLKSIFCEELLNKRVA).

This sequence belongs to the herpesviridae capsid scaffolding protein family. Homomultimer. Interacts with major capsid protein. In terms of assembly, exists in a monomer-dimer equilibrium with the dimer being the active species. In terms of processing, capsid scaffolding protein is cleaved by assemblin after formation of the spherical procapsid. As a result, the capsid obtains its mature, icosahedral shape. Cleavages occur at two or more sites: release (R-site) and maturation (M-site).

The protein localises to the host cytoplasm. It is found in the host nucleus. It carries out the reaction Cleaves -Ala-|-Ser- and -Ala-|-Ala- bonds in the scaffold protein.. Its function is as follows. Acts as a scaffold protein by binding major capsid protein in the cytoplasm, inducing the nuclear localization of both proteins. Multimerizes in the nucleus such as major capsid protein forms the icosahedral T=16 capsid. Autocatalytic cleavage releases the assembly protein, and subsequently abolishes interaction with major capsid protein. Cleavages products are evicted from the capsid before or during DNA packaging. Protease that plays an essential role in virion assembly within the nucleus. Catalyzes the cleavage of the assembly protein after formation of the spherical procapsid. By that cleavage, the capsid matures and gains its icosahedral shape. The cleavage sites seem to include -Ala-Ser-, -Ala-Ala-, as well as Ala-Thr bonds. Assemblin and cleavages products are evicted from the capsid before or during DNA packaging. In terms of biological role, plays a major role in capsid assembly. Acts as a scaffold protein by binding major capsid protein. Multimerizes in the nucleus such as major capsid protein forms the icosahedral T=16 capsid. Cleaved by assemblin after capsid completion. The cleavages products are evicted from the capsid before or during DNA packaging. The chain is Capsid scaffolding protein from Epstein-Barr virus (strain AG876) (HHV-4).